Here is a 397-residue protein sequence, read N- to C-terminus: Protein EMSY-LIKE 3 (397 aa).

Residues 1-40 form a disordered region; sequence MDYRPSDSSGTDDDLPPSHQGRYQRNARPTGNGRPSVLNS. The ENT domain occupies 50–137; the sequence is METQIHLIEQ…PQLVHDAPSP (88 aa). Residues 81 to 107 adopt a coiled-coil conformation; that stretch reads ESLITELRKELRVSDEEHRELLSRVNA. Disordered regions lie at residues 122–221 and 284–330; these read SLQS…SYDP and DPGI…TQNG. Polar residues predominate over residues 164–174; the sequence is LHPSMQPSSSA. The Nuclear localization signal signature appears at 175-182; sequence LRRGGPPP. Positions 363-389 form a coiled coil; it reads AEVEKAKRVLRDHELALMDAIAKLEEI. S390 carries the phosphoserine modification.

Its subcellular location is the nucleus. In terms of biological role, probably involved in the regulation of chromatin states. Contributes to basal immunity. The chain is Protein EMSY-LIKE 3 from Arabidopsis thaliana (Mouse-ear cress).